A 905-amino-acid polypeptide reads, in one-letter code: Alanine--tRNA ligase (905 aa).

Zn(2+) contacts are provided by His-569, His-573, Cys-693, and His-697.

It belongs to the class-II aminoacyl-tRNA synthetase family. It depends on Zn(2+) as a cofactor.

The protein localises to the cytoplasm. The catalysed reaction is tRNA(Ala) + L-alanine + ATP = L-alanyl-tRNA(Ala) + AMP + diphosphate. In terms of biological role, catalyzes the attachment of alanine to tRNA(Ala) in a two-step reaction: alanine is first activated by ATP to form Ala-AMP and then transferred to the acceptor end of tRNA(Ala). Also edits incorrectly charged Ser-tRNA(Ala) and Gly-tRNA(Ala) via its editing domain. The sequence is that of Alanine--tRNA ligase from Roseiflexus castenholzii (strain DSM 13941 / HLO8).